Reading from the N-terminus, the 375-residue chain is Succinyl-diaminopimelate desuccinylase (375 aa).

Histidine 66 contributes to the Zn(2+) binding site. Aspartate 68 is an active-site residue. Aspartate 99 is a Zn(2+) binding site. Residue glutamate 133 is the Proton acceptor of the active site. Residues glutamate 134, glutamate 162, and histidine 348 each contribute to the Zn(2+) site.

Belongs to the peptidase M20A family. DapE subfamily. As to quaternary structure, homodimer. The cofactor is Zn(2+). Co(2+) serves as cofactor.

The catalysed reaction is N-succinyl-(2S,6S)-2,6-diaminopimelate + H2O = (2S,6S)-2,6-diaminopimelate + succinate. It functions in the pathway amino-acid biosynthesis; L-lysine biosynthesis via DAP pathway; LL-2,6-diaminopimelate from (S)-tetrahydrodipicolinate (succinylase route): step 3/3. Catalyzes the hydrolysis of N-succinyl-L,L-diaminopimelic acid (SDAP), forming succinate and LL-2,6-diaminopimelate (DAP), an intermediate involved in the bacterial biosynthesis of lysine and meso-diaminopimelic acid, an essential component of bacterial cell walls. The polypeptide is Succinyl-diaminopimelate desuccinylase (Escherichia coli O157:H7).